Consider the following 359-residue polypeptide: Protein mab-21-like 2 (359 aa).

The protein belongs to the mab-21 family.

The protein localises to the nucleus. The protein resides in the cytoplasm. Functionally, required for eye morphogenesis. May promote the survival of proliferating retinal progenitor cells. This Danio rerio (Zebrafish) protein is Protein mab-21-like 2 (mab21l2).